We begin with the raw amino-acid sequence, 63 residues long: Overexpressed in colon carcinoma 1 protein homolog (63 aa).

Polar residues predominate over residues 1–10 (MGCGNSTATS). Positions 1-37 (MGCGNSTATSAAAGRGKPGAVKDATEDSITEDDKRRN) are disordered.

Belongs to the OCC1 family.

The sequence is that of Overexpressed in colon carcinoma 1 protein homolog from Rattus norvegicus (Rat).